The chain runs to 117 residues: MTANKTAKIQFYEGTDEPVVPEIRLTRSKDGTTGQALFLFEKPQALSSITDGEITGMRMIDSEGEILTKEVKVKFVDGEPIYLEAVYIWKNSSDFDRFMRFANSYAKSNGLGYSEKK.

It belongs to the Psb28 family. In terms of assembly, part of the photosystem II complex.

It is found in the cellular thylakoid membrane. This Prochlorococcus marinus (strain MIT 9215) protein is Photosystem II reaction center Psb28 protein.